The following is a 355-amino-acid chain: dTDP-D-glucose 4,6-dehydratase (355 aa).

Thr-142 is a substrate binding site. Asp-143 functions as the Proton donor in the catalytic mechanism. Residues Glu-144 and Tyr-166 each act as proton acceptor in the active site.

It belongs to the NAD(P)-dependent epimerase/dehydratase family. dTDP-glucose dehydratase subfamily. NAD(+) serves as cofactor.

The catalysed reaction is dTDP-alpha-D-glucose = dTDP-4-dehydro-6-deoxy-alpha-D-glucose + H2O. In Bos taurus (Bovine), this protein is dTDP-D-glucose 4,6-dehydratase (TGDS).